A 397-amino-acid chain; its full sequence is Staphyloferrin A transporter (397 aa).

12 consecutive transmembrane segments (helical) span residues 10-30, 39-59, 67-87, 93-110, 137-157, 162-182, 213-233, 245-265, 271-292, 296-313, 333-353, and 358-378; these read FLLFLGNWIGQIGLNWFVLTT, IVNFCRLVPILLLSVWAGAIA, LLRITISSSFLVTAILCVLTY, PISVIIIYATLRGILSAV, FIINICRSIGPAIAGVILAVY, TFLAQAICYFIAVLLCLPLHF, IFITSLLIMATGFSYTTLLPV, IFGIAMTMCAIGGIIATLVLP, IGMVNMYYLSSFLFGIALLGVV, IVIMFICITLIGLFSQWA, VLSIIMMDRGMIPLGSLLMSI, and FGIVRTFSIMGISTICITMVF.

Belongs to the major facilitator superfamily.

It localises to the cell membrane. Involved in staphyloferrin A secretion. The chain is Staphyloferrin A transporter from Staphylococcus aureus (strain NCTC 8325 / PS 47).